The following is a 163-amino-acid chain: Calmodulin (163 aa).

Position 2 is an N-acetylalanine (alanine 2). EF-hand domains follow at residues 11 to 46 (EQIAEFKEAFALFDKDGDGTITTKELGTVMRSLGQN), 47 to 82 (PTEAELQDMISEVDADGNGTIDFPEFLMLMARKMKE), 84 to 119 (DHEDELREAFKVFDKDGNGFISAAELRHVMTNLGEK), and 120 to 155 (LSEEEVDEMIREADVDGDGQVNYEEFVRMMTSGATD). Residues aspartate 24, aspartate 26, aspartate 28, threonine 30, glutamate 35, aspartate 60, aspartate 62, asparagine 64, threonine 66, glutamate 71, aspartate 97, aspartate 99, asparagine 101, glutamate 108, aspartate 133, aspartate 135, aspartate 137, glutamine 139, and glutamate 144 each contribute to the Ca(2+) site.

It belongs to the calmodulin family. In terms of assembly, associates with the spoke-associated complex containing CFAP61, CFAP91 and CFAP251; the association is calcium sensitive. In terms of processing, trimethylation of Lys-119 observed in other calmodulins is absent here.

Its subcellular location is the cytoplasm. It localises to the cytoskeleton. The protein resides in the flagellum axoneme. Calmodulin mediates the control of a large number of enzymes, ion channels and other proteins by Ca(2+). Among the enzymes to be stimulated by the calmodulin-Ca(2+) complex are a number of protein kinases and phosphatases. The sequence is that of Calmodulin from Chlamydomonas reinhardtii (Chlamydomonas smithii).